Reading from the N-terminus, the 523-residue chain is Asc-type amino acid transporter 1 (523 aa).

A disordered region spans residues 1 to 28; the sequence is MAGHTQQPSGRGNPRPAPSPSPVPGTVP. Over residues 15-25 the composition is skewed to pro residues; it reads RPAPSPSPVPG. The next 9 membrane-spanning stretches (helical) occupy residues 40 to 60, 72 to 92, 113 to 133, 268 to 288, 310 to 330, 362 to 382, 388 to 408, 424 to 444, and 448 to 468; these read IGLLSACTIIIGNIIGSGIFI, VGLALFVWVLGGGVTALGSLC, IFGGLAGFLLLWSAVLIMYPT, AIFISIPLVTFVYTFTNIAYF, LLGYFSWVMPVSVALSTFGGI, CTPIPALLVCCGATAVIMLVG, INYVSFINYLCYGVTILGLLL, LLIPVAYLVFWAFLLVFSFIS, and VCGVGVIIILTGVPIFFLGVF. The disordered stretch occupies residues 499–523; sequence APEEEENGPCPPSLLPATDKPSKPQ.

This sequence belongs to the amino acid-polyamine-organocation (APC) superfamily. As to quaternary structure, disulfide-linked heterodimer with the amino acid transport protein SLC3A2/4F2hc. In terms of tissue distribution, expressed in brain, heart, kidney, liver, lung, pancreas, placenta, and skeletal muscle.

Its subcellular location is the cell membrane. The catalysed reaction is L-alanine(in) + glycine(out) = L-alanine(out) + glycine(in). It carries out the reaction L-serine(out) + L-alanine(in) = L-serine(in) + L-alanine(out). It catalyses the reaction L-threonine(out) + L-alanine(in) = L-threonine(in) + L-alanine(out). The enzyme catalyses L-cysteine(out) + L-alanine(in) = L-cysteine(in) + L-alanine(out). The catalysed reaction is 2-aminoisobutanoate(out) + L-alanine(in) = 2-aminoisobutanoate(in) + L-alanine(out). It carries out the reaction D-serine(out) + L-alanine(in) = D-serine(in) + L-alanine(out). It catalyses the reaction D-alanine(out) + L-alanine(in) = D-alanine(in) + L-alanine(out). The enzyme catalyses L-valine(out) + L-alanine(in) = L-valine(in) + L-alanine(out). The catalysed reaction is L-methionine(out) + L-alanine(in) = L-methionine(in) + L-alanine(out). It carries out the reaction beta-alanine(out) + L-alanine(in) = beta-alanine(in) + L-alanine(out). It catalyses the reaction D-cysteine(out) + L-alanine(in) = D-cysteine(in) + L-alanine(out). The enzyme catalyses D-threonine(out) + L-alanine(in) = D-threonine(in) + L-alanine(out). The catalysed reaction is D-isoleucine(out) + D-serine(in) = D-isoleucine(in) + D-serine(out). It carries out the reaction D-serine(in) = D-serine(out). Its function is as follows. Associates with SLC3A2/4F2hc to form a functional heterodimeric complex that translocates small neutral L- and D-amino acids across the plasma membrane. Preferentially mediates exchange transport, but can also operate via facilitated diffusion. Acts as a major transporter for glycine, L- and D-serine in the central nervous system. At the spinal cord and brainstem regulates glycine metabolism and glycinergic inhibitory neurotransmission by providing for glycine de novo synthesis from L-serine and glycine recycling from astrocytes to glycinergic motor neurons. At Schaffer collateral-CA1 synapses mediates D-serine and glycine release that modulates post-synaptic activation of NMDA receptors and excitatory glutamatergic transmission. May regulate D-serine release from mesenchymal progenitors located in developing subcutaneous adipose tissue, favoring white adipocyte over thermogenic beige adipocyte lineage commitment. In Homo sapiens (Human), this protein is Asc-type amino acid transporter 1 (SLC7A10).